The sequence spans 364 residues: Mannose-1-phosphate guanyltransferase (364 aa).

This sequence belongs to the transferase hexapeptide repeat family.

The protein localises to the cytoplasm. It catalyses the reaction alpha-D-mannose 1-phosphate + GTP + H(+) = GDP-alpha-D-mannose + diphosphate. It participates in nucleotide-sugar biosynthesis; GDP-alpha-D-mannose biosynthesis; GDP-alpha-D-mannose from alpha-D-mannose 1-phosphate (GTP route): step 1/1. Functionally, involved in cell wall synthesis where it is required for glycosylation. Involved in cell cycle progression through cell-size checkpoint. The polypeptide is Mannose-1-phosphate guanyltransferase (mpg1) (Emericella nidulans (strain FGSC A4 / ATCC 38163 / CBS 112.46 / NRRL 194 / M139) (Aspergillus nidulans)).